Here is a 311-residue protein sequence, read N- to C-terminus: Methionyl-tRNA formyltransferase (311 aa).

110–113 (SLLP) serves as a coordination point for (6S)-5,6,7,8-tetrahydrofolate.

This sequence belongs to the Fmt family.

It catalyses the reaction L-methionyl-tRNA(fMet) + (6R)-10-formyltetrahydrofolate = N-formyl-L-methionyl-tRNA(fMet) + (6S)-5,6,7,8-tetrahydrofolate + H(+). Functionally, attaches a formyl group to the free amino group of methionyl-tRNA(fMet). The formyl group appears to play a dual role in the initiator identity of N-formylmethionyl-tRNA by promoting its recognition by IF2 and preventing the misappropriation of this tRNA by the elongation apparatus. The chain is Methionyl-tRNA formyltransferase from Streptococcus pyogenes serotype M28 (strain MGAS6180).